The chain runs to 263 residues: tRNA1(Val) (adenine(37)-N6)-methyltransferase (263 aa).

Belongs to the methyltransferase superfamily. tRNA (adenine-N(6)-)-methyltransferase family.

It is found in the cytoplasm. The catalysed reaction is adenosine(37) in tRNA1(Val) + S-adenosyl-L-methionine = N(6)-methyladenosine(37) in tRNA1(Val) + S-adenosyl-L-homocysteine + H(+). Functionally, specifically methylates the adenine in position 37 of tRNA(1)(Val) (anticodon cmo5UAC). The sequence is that of tRNA1(Val) (adenine(37)-N6)-methyltransferase from Pseudoalteromonas atlantica (strain T6c / ATCC BAA-1087).